A 588-amino-acid chain; its full sequence is ATP-dependent lipid A-core flippase (588 aa).

6 consecutive transmembrane segments (helical) span residues 23–43 (FWPV…IDAG), 56–76 (FITI…IGIT), 141–161 (DALT…TVMM), 162–182 (VICW…GIIV), 257–277 (LVIA…STVI), and 278–298 (TISA…IKPM). An ABC transmembrane type-1 domain is found at 28 to 310 (LLGVLANILY…LTTLNATIQR (283 aa)). The 235-residue stretch at 342–576 (IEFKHVYHAY…DGHYAQLYKV (235 aa)) folds into the ABC transporter domain. 375–382 (GHSGSGKT) is a binding site for ATP.

Belongs to the ABC transporter superfamily. Lipid exporter (TC 3.A.1.106) family. As to quaternary structure, homodimer.

It localises to the cell inner membrane. It catalyses the reaction ATP + H2O + lipid A-core oligosaccharideSide 1 = ADP + phosphate + lipid A-core oligosaccharideSide 2.. In terms of biological role, involved in lipopolysaccharide (LPS) biosynthesis. Translocates lipid A-core from the inner to the outer leaflet of the inner membrane. Transmembrane domains (TMD) form a pore in the inner membrane and the ATP-binding domain (NBD) is responsible for energy generation. This chain is ATP-dependent lipid A-core flippase, found in Legionella pneumophila (strain Lens).